The sequence spans 459 residues: UDP-N-acetylmuramoylalanine--D-glutamate ligase (459 aa).

Position 119 to 125 (119 to 125 (GTNGKTT)) interacts with ATP.

The protein belongs to the MurCDEF family.

Its subcellular location is the cytoplasm. The enzyme catalyses UDP-N-acetyl-alpha-D-muramoyl-L-alanine + D-glutamate + ATP = UDP-N-acetyl-alpha-D-muramoyl-L-alanyl-D-glutamate + ADP + phosphate + H(+). It participates in cell wall biogenesis; peptidoglycan biosynthesis. In terms of biological role, cell wall formation. Catalyzes the addition of glutamate to the nucleotide precursor UDP-N-acetylmuramoyl-L-alanine (UMA). The polypeptide is UDP-N-acetylmuramoylalanine--D-glutamate ligase (Lactiplantibacillus plantarum (strain ATCC BAA-793 / NCIMB 8826 / WCFS1) (Lactobacillus plantarum)).